The following is a 250-amino-acid chain: ATP synthase subunit a (250 aa).

6 consecutive transmembrane segments (helical) span residues 31–51, 85–105, 115–135, 144–164, 194–214, and 217–237; these read SAYM…GMAG, FFPL…IGII, LIVT…YGLY, LFVP…IEVI, FVGM…LPLG, and VAVT…FTIL.

The protein belongs to the ATPase A chain family. F-type ATPases have 2 components, CF(1) - the catalytic core - and CF(0) - the membrane proton channel. CF(1) has five subunits: alpha(3), beta(3), gamma(1), delta(1), epsilon(1). CF(0) has four main subunits: a, b, b' and c.

The protein localises to the cell inner membrane. In terms of biological role, key component of the proton channel; it plays a direct role in the translocation of protons across the membrane. The sequence is that of ATP synthase subunit a from Rhodopseudomonas palustris (strain BisB5).